Reading from the N-terminus, the 1042-residue chain is FHIP family protein AAEL005291 (1042 aa).

The segment covering Met-1–Ser-14 has biased composition (polar residues). Disordered stretches follow at residues Met-1–Ser-31, Asn-494–Gly-514, Pro-821–Asp-866, and Ser-905–His-977. Residues Val-839–Tyr-859 show a composition bias toward polar residues. Low complexity-rich tracts occupy residues Ser-905–Ser-940 and Pro-956–Pro-976.

This sequence belongs to the FHIP family.

This is FHIP family protein AAEL005291 from Aedes aegypti (Yellowfever mosquito).